Reading from the N-terminus, the 251-residue chain is MSGHSKWATTKHKKAANDAKRGKEFAKLIKNIEVAARTGGGDPSANPTLDDMIKKAKKASVPNDNIERARKRGSGEEAGGADWMNIMYEGYGPNGVAMLIECLTDNRNRAATEVRTAMTKNGGNLGESGSVSYMFTRTGVVTVQKGDLSEDDVLMAVLEAGAEEVNDNGDLFEVTCAPTDIQAVRDALVEAGIEVEDSESDFRASVQVPLDADGARKIFKLVDALEDSDDVQNVYTNIDLSDEVLTELEND.

Residues 1–22 (MSGHSKWATTKHKKAANDAKRG) are disordered.

The protein belongs to the TACO1 family.

Its subcellular location is the cytoplasm. This Corynebacterium glutamicum (strain ATCC 13032 / DSM 20300 / JCM 1318 / BCRC 11384 / CCUG 27702 / LMG 3730 / NBRC 12168 / NCIMB 10025 / NRRL B-2784 / 534) protein is Probable transcriptional regulatory protein Cgl1663/cg1872.